A 341-amino-acid polypeptide reads, in one-letter code: L-threonine 3-dehydrogenase (341 aa).

Cys-38 is a binding site for Zn(2+). Active-site charge relay system residues include Thr-40 and His-43. The Zn(2+) site is built by His-63, Glu-64, Cys-93, Cys-96, Cys-99, and Cys-107. Residues Ile-175, Asp-195, Arg-200, 262-264 (LGI), and 286-287 (IY) each bind NAD(+).

Belongs to the zinc-containing alcohol dehydrogenase family. As to quaternary structure, homotetramer. Zn(2+) serves as cofactor.

Its subcellular location is the cytoplasm. It carries out the reaction L-threonine + NAD(+) = (2S)-2-amino-3-oxobutanoate + NADH + H(+). It functions in the pathway amino-acid degradation; L-threonine degradation via oxydo-reductase pathway; glycine from L-threonine: step 1/2. In terms of biological role, catalyzes the NAD(+)-dependent oxidation of L-threonine to 2-amino-3-ketobutyrate. The polypeptide is L-threonine 3-dehydrogenase (Shewanella baltica (strain OS223)).